The primary structure comprises 207 residues: Dephospho-CoA kinase (207 aa).

A DPCK domain is found at 4–204 (VVGLTGGIGS…HLYLQFAEIF (201 aa)). 12–17 (GSGKST) provides a ligand contact to ATP.

This sequence belongs to the CoaE family.

Its subcellular location is the cytoplasm. It carries out the reaction 3'-dephospho-CoA + ATP = ADP + CoA + H(+). The protein operates within cofactor biosynthesis; coenzyme A biosynthesis; CoA from (R)-pantothenate: step 5/5. Catalyzes the phosphorylation of the 3'-hydroxyl group of dephosphocoenzyme A to form coenzyme A. This is Dephospho-CoA kinase from Aggregatibacter actinomycetemcomitans (Actinobacillus actinomycetemcomitans).